Consider the following 111-residue polypeptide: Ribonuclease P protein component (111 aa).

It belongs to the RnpA family. As to quaternary structure, consists of a catalytic RNA component (M1 or rnpB) and a protein subunit.

It catalyses the reaction Endonucleolytic cleavage of RNA, removing 5'-extranucleotides from tRNA precursor.. Functionally, RNaseP catalyzes the removal of the 5'-leader sequence from pre-tRNA to produce the mature 5'-terminus. It can also cleave other RNA substrates such as 4.5S RNA. The protein component plays an auxiliary but essential role in vivo by binding to the 5'-leader sequence and broadening the substrate specificity of the ribozyme. The polypeptide is Ribonuclease P protein component (Borrelia garinii subsp. bavariensis (strain ATCC BAA-2496 / DSM 23469 / PBi) (Borreliella bavariensis)).